The chain runs to 216 residues: MOB kinase activator 3B (216 aa).

Positions 82, 87, 164, and 169 each coordinate Zn(2+).

It belongs to the MOB1/phocein family.

Modulates LATS1 expression in the Hippo signaling pathway which plays a pivotal role in organ size control and tumor suppression by restricting proliferation and promoting apoptosis. This Homo sapiens (Human) protein is MOB kinase activator 3B.